A 652-amino-acid polypeptide reads, in one-letter code: MPAVLPIKLNPSQMRPVAYRIFSKKHGLNLKSTGLETLTEIIGKNYGTEWRGAEAAKMMEEICRLWKEQEMGVFVEGKPLQELFDEITASKKAKEKARVQVVSKSVGLTGVEEIEDREGEPQVNVIREAAPSVDVVWKEFFKVISAFDQPLFHYNARQQRFEKRKTKPTLFANAQSASNMFLTRYHLVYNRLLRNDDTTDLKITSIRSLIGRQGEFSIFGMLSKNPEQKICLQDDTGRILLILAAGCKPDPGVYYPEGSFVICNGRYMKSGDAEVFVVITMGPPVAEKRQETITAYGNMDYLGLHGNPHGSVVRRIERQVEASMLAEEKRLVDQKVIVFGGDMYLDNPLTLKALQKVFSTIELEFQDSGTKKPLAMVFSGDFTSQYQPPHLYKKGFDKLEELFKEFSSIITGVKIIFVPGQRDPWTNTFPTQNAVVPLQPLPTTMINRVARLCGEDVSMSSNPCRMAYLTQDMVFYRDGLSERLRKCNLQLDSAKDDSDDSDDDIEIDNDEVMINDVVVNEPESSFDFGEGLSNLTRPVDISTPMASQVGPTNTLSAKEVESRKIVRTICDQGHLSPFNRHDRPVAWDYDETLWLSPLPTILFMVDTHAPKFSLRYEECMVVNPGPFLNRKIASWVEYDPSKKTVKERQLHI.

Belongs to the DNA polymerase epsilon subunit B family. As to quaternary structure, heterotetramer. Consists of four subunits: POL2, DPB2, DPB3 and DPB4.

It is found in the nucleus. In terms of biological role, as accessory component of the DNA polymerase epsilon (DNA polymerase II) participates in chromosomal DNA replication. This chain is DNA polymerase epsilon subunit B (DPB2), found in Yarrowia lipolytica (strain CLIB 122 / E 150) (Yeast).